A 170-amino-acid polypeptide reads, in one-letter code: AP-5 complex subunit sigma-1 (170 aa).

Probably part of the adaptor protein complex 5 (AP-5) a tetramer composed of AP5B1, AP5M1, AP5S1 and AP5Z1. Interacts with ZFYVE26 and SPG11.

The protein resides in the cytoplasm. Its subcellular location is the cytosol. The protein localises to the late endosome membrane. It is found in the lysosome membrane. In terms of biological role, as part of AP-5, a probable fifth adaptor protein complex it may be involved in endosomal transport. This Mus musculus (Mouse) protein is AP-5 complex subunit sigma-1 (Ap5s1).